A 365-amino-acid chain; its full sequence is ADP-ribosylhydrolase ARH3 (365 aa).

E42, T77, D78, and D79 together coordinate Mg(2+). A substrate-binding site is contributed by D78. Substrate-binding positions include 147–153 (KGSYGNG), H183, L236, and I272. Positions 315, 317, and 318 each coordinate Mg(2+).

This sequence belongs to the ADP-ribosylglycohydrolase family. Monomer. Mg(2+) serves as cofactor.

The protein resides in the nucleus. The protein localises to the cytoplasm. It localises to the chromosome. It is found in the mitochondrion matrix. The enzyme catalyses [(1''-&gt;2')-ADP-alpha-D-ribose](n) + H2O = [(1''-&gt;2')-ADP-alpha-D-ribose](n-1) + ADP-D-ribose. It carries out the reaction 1''-O-acetyl-ADP-alpha-D-ribose + H2O = ADP-D-ribose + acetate + H(+). The catalysed reaction is O-(ADP-D-ribosyl)-L-seryl-[protein] + H2O = ADP-D-ribose + L-seryl-[protein]. It catalyses the reaction alpha-NAD(+) + H2O = ADP-D-ribose + nicotinamide + H(+). The protein undergoes a dramatic conformational switch from closed to open states upon substrate-binding, which enables specific substrate recognition for the 1''-O-linkage. The glutamate flap (Glu-42) blocks substrate entrance to Mg(2+) in the unliganded closed state. In presence of substrate, Glu-42 is ejected from the active site: this closed-to-open transition significantly widens the substrate-binding channel and precisely positions the scissile 1''-O-linkage for cleavage while securing tightly 2'- and 3'-hydroxyls of ADP-ribose. In terms of biological role, ADP-ribosylhydrolase that preferentially hydrolyzes the scissile alpha-O-linkage attached to the anomeric C1'' position of ADP-ribose and acts on different substrates, such as proteins ADP-ribosylated on serine and threonine, free poly(ADP-ribose) and O-acetyl-ADP-D-ribose. Specifically acts as a serine mono-ADP-ribosylhydrolase by mediating the removal of mono-ADP-ribose attached to serine residues on proteins, thereby playing a key role in DNA damage response. Serine ADP-ribosylation of proteins constitutes the primary form of ADP-ribosylation of proteins in response to DNA damage. Does not hydrolyze ADP-ribosyl-arginine, -cysteine, -diphthamide, or -asparagine bonds. Also able to degrade protein free poly(ADP-ribose), which is synthesized in response to DNA damage: free poly(ADP-ribose) acts as a potent cell death signal and its degradation by ADPRHL2 protects cells from poly(ADP-ribose)-dependent cell death, a process named parthanatos. Also hydrolyzes free poly(ADP-ribose) in mitochondria. Specifically digests O-acetyl-ADP-D-ribose, a product of deacetylation reactions catalyzed by sirtuins. Specifically degrades 1''-O-acetyl-ADP-D-ribose isomer, rather than 2''-O-acetyl-ADP-D-ribose or 3''-O-acetyl-ADP-D-ribose isomers. The polypeptide is ADP-ribosylhydrolase ARH3 (ADPRS) (Bos taurus (Bovine)).